Reading from the N-terminus, the 270-residue chain is Transcription factor bHLH113 (270 aa).

The disordered stretch occupies residues 109–153 (CTVDKSTKSSTKKRTGTGNGQESDQNRKPGKKGKRNQEKSSVGIA). A bHLH domain is found at 144 to 193 (NQEKSSVGIAKVRKERLGERIAALQQLVSPYGKTDAASVLHEAMGYIKFL).

In terms of assembly, homodimer.

It is found in the nucleus. This chain is Transcription factor bHLH113 (BHLH113), found in Arabidopsis thaliana (Mouse-ear cress).